The chain runs to 207 residues: Small ribosomal subunit protein uS4c (207 aa).

The segment at 20 to 52 is disordered; sequence GFSKKIDRNHTPPGQHGWKKKASDQKKSKESQY. Positions 40–52 are enriched in basic and acidic residues; the sequence is KASDQKKSKESQY. The S4 RNA-binding domain maps to 97 to 158; that stretch reads MRLDNIIYRL…NSQQLIKNYL (62 aa).

Belongs to the universal ribosomal protein uS4 family. As to quaternary structure, part of the 30S ribosomal subunit. Contacts protein S5. The interaction surface between S4 and S5 is involved in control of translational fidelity.

It is found in the plastid. Functionally, one of the primary rRNA binding proteins, it binds directly to 16S rRNA where it nucleates assembly of the body of the 30S subunit. In terms of biological role, with S5 and S12 plays an important role in translational accuracy. The chain is Small ribosomal subunit protein uS4c (rps4) from Prototheca wickerhamii.